A 280-amino-acid polypeptide reads, in one-letter code: Putative ABC transporter ATP-binding protein PYRAB03730 (280 aa).

The 241-residue stretch at 4-244 (IEVENVSFKY…VEFLERIGIR (241 aa)) folds into the ABC transporter domain. 38 to 45 (GPSGSGKS) contacts ATP.

This sequence belongs to the ABC transporter superfamily.

It localises to the cell membrane. In terms of biological role, probably part of an ABC transporter complex. Responsible for energy coupling to the transport system. This is Putative ABC transporter ATP-binding protein PYRAB03730 from Pyrococcus abyssi (strain GE5 / Orsay).